The primary structure comprises 222 residues: Phosphate-specific transport system accessory protein PhoU homolog 1 (222 aa).

It belongs to the PhoU family. Homodimer.

The protein localises to the cytoplasm. In terms of biological role, plays a role in the regulation of phosphate uptake. The sequence is that of Phosphate-specific transport system accessory protein PhoU homolog 1 (phoU1) from Mycobacterium leprae (strain TN).